Reading from the N-terminus, the 155-residue chain is Ferredoxin-6, chloroplastic (155 aa).

The transit peptide at 1–58 (MSTATAPRLPAPRSGASYHYQTTAAPAANTLSFAGHARQAARASGPRLSSRFVASAAA) directs the protein to the chloroplast. Positions 61 to 152 (HKVKLVGPDG…DCVIHTHKEE (92 aa)) constitute a 2Fe-2S ferredoxin-type domain. Positions 98, 103, 106, and 136 each coordinate [2Fe-2S] cluster.

It belongs to the 2Fe2S plant-type ferredoxin family. The cofactor is [2Fe-2S] cluster.

The protein localises to the plastid. It is found in the chloroplast. Ferredoxins are iron-sulfur proteins that transfer electrons in a wide variety of metabolic reactions. In Zea mays (Maize), this protein is Ferredoxin-6, chloroplastic (FDX6).